Reading from the N-terminus, the 355-residue chain is MPVLHNRISNQKLKEKMLAETQERQTLSFYKYFALDNPSMFRDKLYTQWNQLSVFGRVYIAKEGINAQISVPIDHYNDFKASLFNAHPALDQIRLNTALEDNGRSFWVLRMKVRQRIVADGIEDETFNPAHTGQYLKAHEVNEMIKDPDALFVDMRNHYEYEVGHFKNAIKVPSDTFREQLPMAVDMLKEDKEKKMVLYCTGGIRCEKASAYLLHHGFKNVYHVEGGIIEYVRTAKKKDLPLHFIGKNFVFDERMGERVSEEVIAHCHQCEQFCDTHVNCHNSACHLLFIQCAICSEKFSGCCSAICQEELELSPEEQRLRRSARGNKIKIFNKSKDVLETIMNKSIIDQGNKEG.

In terms of domain architecture, Rhodanese spans 146 to 240 (KDPDALFVDM…YVRTAKKKDL (95 aa)). The Cysteine persulfide intermediate role is filled by C200.

It belongs to the TrhO family.

The catalysed reaction is uridine(34) in tRNA + AH2 + O2 = 5-hydroxyuridine(34) in tRNA + A + H2O. Catalyzes oxygen-dependent 5-hydroxyuridine (ho5U) modification at position 34 in tRNAs. The sequence is that of tRNA uridine(34) hydroxylase from Hamiltonella defensa subsp. Acyrthosiphon pisum (strain 5AT).